Consider the following 528-residue polypeptide: 4-chlorobenzoate--CoA ligase (528 aa).

Residues 161–169 (TSGTTGLPK), 300–305 (NIYGTT), and N409 each bind ATP.

Belongs to the ATP-dependent AMP-binding enzyme family. Homodimer. Requires Mg(2+) as cofactor.

The enzyme catalyses 4-chlorobenzoate + ATP + CoA = 4-chlorobenzoyl-CoA + AMP + diphosphate. The protein operates within xenobiotic degradation; 4-chlorobenzoate degradation; 4-hydroxybenzoate from 4-chlorobenzoate: step 2/3. Its activity is regulated as follows. Unaffected by 5,5'-dithiobis-(2-nitrobenzoic acid), 4-chloromercuribenzoate and sodium azide. Inhibited by Cu(2+), Fe(2+) and Zn(2+). Unaffected by Na(+), K(+) and Li(+). Its function is as follows. Catalyzes the formation of chlorobenzoyl-CoA via a 2 step reaction. First 4-chlorobenzoyl is adenylated by ATP, followed by acyl transfer from the 4-chlorobenzoyl-AMP intermediate to CoA. Benzoate, 4-bromobenzoate, 4-iodobenzoate and 4-methylbenzoate also act as substrates. Inactive towards 4-aminobenzoate, 4-hydroxybenzoate, 2-aminobenzoate, 2,3-dihydroxybenzoate, 4-coumarate and the aliphatic carboxylic acids palmate, caproate, laurate and butyrate. Negligible activity is detected when ATP is replaced by UTP, CTP or GTP as cosubstrate. In Pseudomonas sp. (strain CBS-3), this protein is 4-chlorobenzoate--CoA ligase.